A 254-amino-acid chain; its full sequence is 3-deoxy-manno-octulosonate cytidylyltransferase (254 aa).

It belongs to the KdsB family.

The protein resides in the cytoplasm. The catalysed reaction is 3-deoxy-alpha-D-manno-oct-2-ulosonate + CTP = CMP-3-deoxy-beta-D-manno-octulosonate + diphosphate. The protein operates within nucleotide-sugar biosynthesis; CMP-3-deoxy-D-manno-octulosonate biosynthesis; CMP-3-deoxy-D-manno-octulosonate from 3-deoxy-D-manno-octulosonate and CTP: step 1/1. It participates in bacterial outer membrane biogenesis; lipopolysaccharide biosynthesis. Its function is as follows. Activates KDO (a required 8-carbon sugar) for incorporation into bacterial lipopolysaccharide in Gram-negative bacteria. The polypeptide is 3-deoxy-manno-octulosonate cytidylyltransferase (Bordetella parapertussis (strain 12822 / ATCC BAA-587 / NCTC 13253)).